An 82-amino-acid chain; its full sequence is Small ribosomal subunit protein uS17 (82 aa).

This sequence belongs to the universal ribosomal protein uS17 family. As to quaternary structure, part of the 30S ribosomal subunit.

Functionally, one of the primary rRNA binding proteins, it binds specifically to the 5'-end of 16S ribosomal RNA. The sequence is that of Small ribosomal subunit protein uS17 from Pelobacter propionicus (strain DSM 2379 / NBRC 103807 / OttBd1).